Reading from the N-terminus, the 772-residue chain is Mitochondrial intermediate peptidase (772 aa).

A mitochondrion-targeting transit peptide spans 1–37; the sequence is MLRTIILKAGSNASIPSPSRQNKLLRFFATAGAVSRT. A Zn(2+)-binding site is contributed by histidine 558. Glutamate 559 is an active-site residue. Zn(2+)-binding residues include histidine 562 and glutamate 587.

This sequence belongs to the peptidase M3 family. Zn(2+) serves as cofactor.

It is found in the mitochondrion matrix. The enzyme catalyses Release of an N-terminal octapeptide as second stage of processing of some proteins imported into the mitochondrion.. Its activity is regulated as follows. Stimulated by Fe(2+). Its function is as follows. Cleaves proteins, imported into the mitochondrion, to their mature size. While most mitochondrial precursor proteins are processed to the mature form in one step by mitochondrial processing peptidase (MPP), the sequential cleavage by MIP of an octapeptide after initial processing by MPP is a required step for a subgroup of nuclear-encoded precursor proteins destined for the matrix or the inner membrane. Cleaves precursor proteins of respiratory components, including subunits of the electron transport chain and tricarboxylic acid cycle enzymes, and components of the mitochondrial genetic machinery, including ribosomal proteins, translation factors, and proteins required for mitochondrial DNA metabolism. The protein is Mitochondrial intermediate peptidase (OCT1) of Saccharomyces cerevisiae (strain ATCC 204508 / S288c) (Baker's yeast).